The chain runs to 392 residues: Protein O-glucosyltransferase 1 (392 aa).

Residues 1-23 (MEWWASSPLRLWLLLFLLPSAQG) form the signal peptide. Residues asparagine 40 and asparagine 53 are each glycosylated (N-linked (GlcNAc...) asparagine). Disulfide bonds link cysteine 49–cysteine 56, cysteine 54–cysteine 357, cysteine 102–cysteine 108, and cysteine 263–cysteine 286. Residues 103 to 107 (MFPSR) are interaction with the consensus sequence C-X-S-X-[PA]-C in peptide substrates. The active-site Proton donor/acceptor is the aspartate 133. The segment at 172–178 (AVWPIYP) is interaction with the consensus sequence C-X-S-X-[PA]-C in peptide substrates. Residue tyrosine 177 participates in UDP-alpha-D-glucose binding. A glycan (N-linked (GlcNAc...) asparagine) is linked at asparagine 204. UDP-alpha-D-glucose-binding positions include serine 212, arginine 218, and 274–279 (VAASFR). An N-linked (GlcNAc...) asparagine glycan is attached at asparagine 373. A Prevents secretion from ER motif is present at residues 389–392 (KTEL).

It belongs to the glycosyltransferase 90 family. As to expression, expressed in most adult tissues at different intensities. Abundantly expressed in liver. Expressed also in brain, heart, skeletal muscle, spleen, kidney, placenta, lung and peripheral blood leukocyte. Not detectable in colon, thymus and small intestine. Expressed in the epidermis, especially in the upper parts, stratum spinosum and stratum granulosum (at protein level).

Its subcellular location is the endoplasmic reticulum lumen. It carries out the reaction L-seryl-[EGF-like domain protein] + UDP-alpha-D-xylose = 3-O-(beta-D-xylosyl)-L-seryl-[EGF-like domain protein] + UDP + H(+). It catalyses the reaction L-seryl-[EGF-like domain protein] + UDP-alpha-D-glucose = 3-O-(beta-D-glucosyl)-L-seryl-[EGF-like domain protein] + UDP + H(+). The protein operates within protein modification; protein glycosylation. In terms of biological role, dual specificity glycosyltransferase that catalyzes the transfer of glucose and xylose from UDP-glucose and UDP-xylose, respectively, to a serine residue found in the consensus sequence of C-X-S-X-P-C. Specifically targets extracellular EGF repeats of protein such as CRB2, F7, F9 and NOTCH2. Acts as a positive regulator of Notch signaling by mediating O-glucosylation of Notch, leading to regulate muscle development. Notch glucosylation does not affect Notch ligand binding. Required during early development to promote gastrulation: acts by mediating O-glucosylation of CRB2, which is required for CRB2 localization to the cell membrane. This chain is Protein O-glucosyltransferase 1, found in Homo sapiens (Human).